Here is a 390-residue protein sequence, read N- to C-terminus: Succinyl-diaminopimelate desuccinylase (390 aa).

A Zn(2+)-binding site is contributed by His75. Asp77 is an active-site residue. Asp108 contacts Zn(2+). Glu141 serves as the catalytic Proton acceptor. Zn(2+) contacts are provided by Glu142, Glu170, and His359.

This sequence belongs to the peptidase M20A family. DapE subfamily. In terms of assembly, homodimer. Requires Zn(2+) as cofactor. Co(2+) serves as cofactor.

It catalyses the reaction N-succinyl-(2S,6S)-2,6-diaminopimelate + H2O = (2S,6S)-2,6-diaminopimelate + succinate. Its pathway is amino-acid biosynthesis; L-lysine biosynthesis via DAP pathway; LL-2,6-diaminopimelate from (S)-tetrahydrodipicolinate (succinylase route): step 3/3. Its function is as follows. Catalyzes the hydrolysis of N-succinyl-L,L-diaminopimelic acid (SDAP), forming succinate and LL-2,6-diaminopimelate (DAP), an intermediate involved in the bacterial biosynthesis of lysine and meso-diaminopimelic acid, an essential component of bacterial cell walls. The sequence is that of Succinyl-diaminopimelate desuccinylase from Maricaulis maris (strain MCS10) (Caulobacter maris).